A 113-amino-acid polypeptide reads, in one-letter code: Ig kappa chain V-II region MOPC 511 (113 aa).

The segment at 1-23 is framework-1; that stretch reads DIVITQDELSKPVTSGESVSISC. A disulfide bond links cysteine 23 and cysteine 93. A complementarity-determining-1 region spans residues 24–39; the sequence is RSSKSLLYKDGKTYLN. A framework-2 region spans residues 40 to 54; that stretch reads WFLQGPQQSPRLLIY. Positions 55–61 are complementarity-determining-2; that stretch reads LMSTRAS. The interval 62-93 is framework-3; sequence GVSDRFSGSGSGTDFTLEISRVKAEDVGVYYC. The tract at residues 94–102 is complementarity-determining-3; the sequence is QQLVEYPLT. The framework-4 stretch occupies residues 103-112; the sequence is FGAGTKLELK.

The polypeptide is Ig kappa chain V-II region MOPC 511 (Mus musculus (Mouse)).